A 1120-amino-acid chain; its full sequence is Transcription-repair-coupling factor (1120 aa).

Residues 591 to 756 (DLTNGMLMDR…LTGLKELSII (166 aa)) enclose the Helicase ATP-binding domain. 604–611 (GDVGFGKT) provides a ligand contact to ATP. The short motif at 709–712 (DEEQ) is the DEEQ box element. The 157-residue stretch at 777–933 (IIRDALLREH…TIASHDADLR (157 aa)) folds into the Helicase C-terminal domain.

It in the N-terminal section; belongs to the UvrB family. The protein in the C-terminal section; belongs to the helicase family. RecG subfamily.

It is found in the cytoplasm. In terms of biological role, couples transcription and DNA repair by recognizing RNA polymerase (RNAP) stalled at DNA lesions. Mediates ATP-dependent release of RNAP and its truncated transcript from the DNA, and recruitment of nucleotide excision repair machinery to the damaged site. In Rickettsia typhi (strain ATCC VR-144 / Wilmington), this protein is Transcription-repair-coupling factor.